Consider the following 205-residue polypeptide: ATP phosphoribosyltransferase (205 aa).

Belongs to the ATP phosphoribosyltransferase family. Short subfamily. In terms of assembly, heteromultimer composed of HisG and HisZ subunits.

The protein localises to the cytoplasm. It catalyses the reaction 1-(5-phospho-beta-D-ribosyl)-ATP + diphosphate = 5-phospho-alpha-D-ribose 1-diphosphate + ATP. It functions in the pathway amino-acid biosynthesis; L-histidine biosynthesis; L-histidine from 5-phospho-alpha-D-ribose 1-diphosphate: step 1/9. Catalyzes the condensation of ATP and 5-phosphoribose 1-diphosphate to form N'-(5'-phosphoribosyl)-ATP (PR-ATP). Has a crucial role in the pathway because the rate of histidine biosynthesis seems to be controlled primarily by regulation of HisG enzymatic activity. This Ruthia magnifica subsp. Calyptogena magnifica protein is ATP phosphoribosyltransferase.